Consider the following 503-residue polypeptide: CDK5 regulatory subunit-associated protein 3 (503 aa).

3 short sequence motifs (shuffled ATG8-binding motif) span residues 266 to 269, 288 to 291, and 306 to 309; these read IDWG. Residues 268-503 are required for interaction with UFL1 and mediates interaction with CHEK1; it reads WGDFGVEAVS…RPVNLMGTSL (236 aa). The RPL10a-binding domain (RBD) stretch occupies residues 352–367; that stretch reads DELMELEIFLSQRAVE. Lys-447 participates in a covalent cross-link: Glycyl lysine isopeptide (Lys-Gly) (interchain with G-Cter in SUMO2).

It belongs to the CDK5RAP3 family. In terms of assembly, substrate adapter component of the UFM1 ribosome E3 ligase (UREL) complex, composed of UFL1, DDRGK1 and CDK5RAP3. Interaction with UFL1 anchors CDK5RAP3 in the cytoplasm, preventing its translocation to the nucleus which allows expression of the CCND1 cyclin and progression of cells through the G1/S transition. Interacts with ATG8 family proteins MAP1LC3A, MAP1LC3B, GABARAP, GABARAPL1 and GABARAPL2. Interacts with CDK5R1; competes with CDK5RAP1 and CDK5RAP2. Interacts with RELA. Interacts with CHEK1; may negatively regulate CHEK1 and thereby stimulate entry into mitosis. Interacts with CDKN2A/ARF and MDM2; forms a ternary complex involved in regulation of p53/TP53. Interacts with MAPK14. Interacts with CCNB1. Interacts with TUBG1; may regulate CDK5RAP3 in mitotic G2/M transition checkpoint. Post-translationally, may be phosphorylated by CDK5. In terms of processing, ubiquitinated. Probably triggers proteasomal degradation and is negatively regulated by UFL1. May be ufmylated. Post-translationally, cleaved by caspases early during apoptosis, the resulting peptides may play a role in rupture of the nuclear envelope. As to expression, widely expressed with higher expression in secretory tissues.

The protein localises to the endoplasmic reticulum membrane. Its subcellular location is the cytoplasm. It localises to the nucleus. It is found in the cytoskeleton. The protein resides in the microtubule organizing center. The protein localises to the centrosome. Substrate adapter of E3 ligase complexes mediating ufmylation, the covalent attachment of the ubiquitin-like modifier UFM1 to substrate proteins, and which is involved in various processes, such as ribosome recycling and reticulophagy (also called ER-phagy). As part of the UREL complex, plays a key role in ribosome recycling by promoting mono-ufmylation of RPL26/uL24 subunit of the 60S ribosome. Ufmylation of RPL26/uL24 occurs on free 60S ribosomes following ribosome dissociation: it weakens the junction between post-termination 60S subunits and SEC61 translocons, promoting release and recycling of the large ribosomal subunit from the endoplasmic reticulum membrane. Ufmylation of RPL26/uL24 and subsequent 60S ribosome recycling either take place after normal termination of translation or after ribosome stalling during cotranslational translocation at the endoplasmic reticulum. Within the UREL complex, CDK5RAP3 acts as a substrate adapter that constrains UFL1 ligase activity to mono-ufmylate RPL26/uL24 at 'Lys-134'. The UREL complex is also involved in reticulophagy in response to endoplasmic reticulum stress by promoting ufmylation of proteins such as CYB5R3, thereby promoting lysosomal degradation of ufmylated proteins. Also acts as a regulator of transcription: negatively regulates NF-kappa-B-mediated gene transcription through the control of RELA phosphorylation. Also regulates mitotic G2/M transition checkpoint and mitotic G2 DNA damage checkpoint. Through its interaction with CDKN2A/ARF and MDM2 may induce MDM2-dependent p53/TP53 ubiquitination, stabilization and activation in the nucleus, thereby promoting G1 cell cycle arrest and inhibition of cell proliferation. May also play a role in the rupture of the nuclear envelope during apoptosis. May regulate MAPK14 activity by regulating its dephosphorylation by PPM1D/WIP1. Required for liver development. The sequence is that of CDK5 regulatory subunit-associated protein 3 from Mus musculus (Mouse).